The sequence spans 531 residues: Probable cytochrome P450 4e1 (531 aa).

Residues glutamate 307 and cysteine 444 each coordinate heme.

It belongs to the cytochrome P450 family. Heme is required as a cofactor.

It localises to the endoplasmic reticulum membrane. Its subcellular location is the microsome membrane. Functionally, may be involved in the metabolism of insect hormones and in the breakdown of synthetic insecticides. The protein is Probable cytochrome P450 4e1 (Cyp4e1) of Drosophila melanogaster (Fruit fly).